We begin with the raw amino-acid sequence, 413 residues long: Serine/threonine transporter SstT (413 aa).

9 helical membrane-spanning segments follow: residues glycine 22–phenylalanine 42, alanine 61–glycine 81, isoleucine 89–phenylalanine 109, alanine 148–leucine 168, isoleucine 189–leucine 209, leucine 224–phenylalanine 244, methionine 305–isoleucine 325, valine 337–isoleucine 357, and leucine 363–valine 383.

It belongs to the dicarboxylate/amino acid:cation symporter (DAACS) (TC 2.A.23) family.

The protein localises to the cell inner membrane. The catalysed reaction is L-serine(in) + Na(+)(in) = L-serine(out) + Na(+)(out). It catalyses the reaction L-threonine(in) + Na(+)(in) = L-threonine(out) + Na(+)(out). Involved in the import of serine and threonine into the cell, with the concomitant import of sodium (symport system). The chain is Serine/threonine transporter SstT from Histophilus somni (strain 129Pt) (Haemophilus somnus).